We begin with the raw amino-acid sequence, 141 residues long: Large ribosomal subunit protein uL11 (141 aa).

This sequence belongs to the universal ribosomal protein uL11 family. As to quaternary structure, part of the ribosomal stalk of the 50S ribosomal subunit. Interacts with L10 and the large rRNA to form the base of the stalk. L10 forms an elongated spine to which L12 dimers bind in a sequential fashion forming a multimeric L10(L12)X complex. In terms of processing, one or more lysine residues are methylated.

Its function is as follows. Forms part of the ribosomal stalk which helps the ribosome interact with GTP-bound translation factors. The sequence is that of Large ribosomal subunit protein uL11 from Chlamydia pneumoniae (Chlamydophila pneumoniae).